Here is a 258-residue protein sequence, read N- to C-terminus: Imidazole glycerol phosphate synthase subunit HisF (258 aa).

Residues Asp-11 and Asp-130 contribute to the active site.

It belongs to the HisA/HisF family. As to quaternary structure, heterodimer of HisH and HisF.

Its subcellular location is the cytoplasm. The catalysed reaction is 5-[(5-phospho-1-deoxy-D-ribulos-1-ylimino)methylamino]-1-(5-phospho-beta-D-ribosyl)imidazole-4-carboxamide + L-glutamine = D-erythro-1-(imidazol-4-yl)glycerol 3-phosphate + 5-amino-1-(5-phospho-beta-D-ribosyl)imidazole-4-carboxamide + L-glutamate + H(+). It participates in amino-acid biosynthesis; L-histidine biosynthesis; L-histidine from 5-phospho-alpha-D-ribose 1-diphosphate: step 5/9. In terms of biological role, IGPS catalyzes the conversion of PRFAR and glutamine to IGP, AICAR and glutamate. The HisF subunit catalyzes the cyclization activity that produces IGP and AICAR from PRFAR using the ammonia provided by the HisH subunit. The chain is Imidazole glycerol phosphate synthase subunit HisF from Yersinia pseudotuberculosis serotype O:1b (strain IP 31758).